We begin with the raw amino-acid sequence, 1196 residues long: Nucleolar protein 6 (1196 aa).

Disordered regions lie at residues 1-74 and 1140-1196; these read MPGK…NVKP and KREQ…KALK. Composition is skewed to basic and acidic residues over residues 22–31 and 65–74; these read HAEDHSDLEH and HRGDTKNVKP. The span at 1165–1187 shows a compositional bias: basic residues; the sequence is KPKKHGKRKGTGKAAPPKKKRLI.

It belongs to the NRAP family. As to quaternary structure, part of the small subunit (SSU) processome, composed of more than 70 proteins and the RNA chaperone small nucleolar RNA (snoRNA) U3.

The protein resides in the nucleus. The protein localises to the nucleolus. Its subcellular location is the chromosome. Its function is as follows. Part of the small subunit (SSU) processome, first precursor of the small eukaryotic ribosomal subunit. During the assembly of the SSU processome in the nucleolus, many ribosome biogenesis factors, an RNA chaperone and ribosomal proteins associate with the nascent pre-rRNA and work in concert to generate RNA folding, modifications, rearrangements and cleavage as well as targeted degradation of pre-ribosomal RNA by the RNA exosome. This Drosophila simulans (Fruit fly) protein is Nucleolar protein 6.